We begin with the raw amino-acid sequence, 882 residues long: Bifunctional heparan sulfate N-deacetylase/N-sulfotransferase 1 (882 aa).

Over 1–17 the chain is Cytoplasmic; the sequence is MPALACLRRLCRHVSPQ. The segment at 1 to 169 is sufficient for localization to Golgi membrane; the sequence is MPALACLRRL…VAYGVGIIGF (169 aa). A helical; Signal-anchor for type II membrane protein transmembrane segment spans residues 18–39; that stretch reads AVLFLLFIFCLFSVFISAYYLY. The interval 40-598 is heparan sulfate N-deacetylase 1; sequence GWKRGLEPSA…KRHKDIWSKE (559 aa). Residues 40–882 lie on the Lumenal side of the membrane; the sequence is GWKRGLEPSA…WLREDLQNTR (843 aa). N-linked (GlcNAc...) asparagine glycans are attached at residues asparagine 231, asparagine 351, and asparagine 401. Residues 599 to 882 are heparan sulfate N-sulfotransferase 1; it reads KTCDRFPKLL…WLREDLQNTR (284 aa). Lysine 614 serves as the catalytic For sulfotransferase activity. 614-618 contributes to the adenosine 3',5'-bisphosphate binding site; that stretch reads KTGTT. Asparagine 667 carries N-linked (GlcNAc...) asparagine glycosylation. Residues serine 712 and tryptophan 817 each contribute to the adenosine 3',5'-bisphosphate site. Cysteine 818 and cysteine 828 are joined by a disulfide. 833–837 is a binding site for adenosine 3',5'-bisphosphate; that stretch reads KGRKY.

Belongs to the sulfotransferase 1 family. NDST subfamily. In terms of assembly, monomer. Interacts with heparan sulfate co-polymerase subunits EXT1 and EXT2. Interacts with NDST1 isoform 3. As to quaternary structure, interacts with heparan sulfate co-polymerase subunits EXT1 and EXT2. Interacts with NDST1 isoform 1. In terms of tissue distribution, widely expressed. Expression is most abundant in heart, liver and pancreas.

Its subcellular location is the golgi apparatus. It is found in the trans-Golgi network membrane. It localises to the cis-Golgi network membrane. The enzyme catalyses N-acetyl-alpha-D-glucosaminyl-[heparan sulfate](n) + H2O = alpha-D-glucosaminyl-[heparan sulfate](n) + acetate. It carries out the reaction alpha-D-glucosaminyl-[heparan sulfate](n) + 3'-phosphoadenylyl sulfate = N-sulfo-alpha-D-glucosaminyl-[heparan sulfate](n) + adenosine 3',5'-bisphosphate + 2 H(+). The protein operates within glycan metabolism; heparan sulfate biosynthesis. It functions in the pathway glycan metabolism; heparin biosynthesis. Its function is as follows. Essential bifunctional enzyme that catalyzes both the N-deacetylation and the N-sulfation of glucosamine (GlcNAc) of the glycosaminoglycan in heparan sulfate. Modifies the GlcNAc-GlcA disaccharide repeating sugar backbone to make N-sulfated heparosan, a prerequisite substrate for later modifications in heparin biosynthesis. Plays a role in determining the extent and pattern of sulfation of heparan sulfate. Participates in biosynthesis of heparan sulfate that can ultimately serve as L-selectin ligands, thereby playing a role in inflammatory response. Required for the exosomal release of SDCBP, CD63 and syndecan. In terms of biological role, lacks both N-deacetylase and N-sulfotransferase activities. Acts as a dominant negative on isoform 1, likely by changing the composition of enzyme complexes responsible for elongation and modification of heparan sulfates. The sequence is that of Bifunctional heparan sulfate N-deacetylase/N-sulfotransferase 1 from Homo sapiens (Human).